We begin with the raw amino-acid sequence, 270 residues long: Fibroblast growth factor 5 (270 aa).

The N-terminal stretch at 1 to 20 is a signal peptide; the sequence is MSLSFLLLLFLSHLILSAWA. The tract at residues 25–86 is disordered; that stretch reads RLAPKGQPGP…EQSSFQWSPS (62 aa). The span at 41-69 shows a compositional bias: low complexity; that stretch reads PGGASSRRSSSSTATSSSSPASSSSAASR. Residues 76 to 86 are compositionally biased toward polar residues; it reads LEQSSFQWSPS. N-linked (GlcNAc...) asparagine glycosylation is present at Asn112. Positions 237–257 are disordered; the sequence is EKKKPPNPVKPKVPLSAPRRS.

Belongs to the heparin-binding growth factors family. In terms of assembly, interacts with FGFR1 and FGFR2. Affinity between fibroblast growth factors (FGFs) and their receptors is increased by heparan sulfate glycosaminoglycans that function as coreceptors.

The protein localises to the secreted. Functionally, plays an important role in the regulation of cell proliferation and cell differentiation. Required for normal regulation of the hair growth cycle. Functions as an inhibitor of hair elongation by promoting progression from anagen, the growth phase of the hair follicle, into catagen the apoptosis-induced regression phase. The chain is Fibroblast growth factor 5 (FGF5) from Bos taurus (Bovine).